A 198-amino-acid polypeptide reads, in one-letter code: Ras-related protein Rab-34, isoform NARR (198 aa).

A run of 13 repeats spans residues 7–15 (PRDDVGSPR), 16–24 (PRVIVGTIR), 25–33 (PRVIVGTIR), 34–42 (PRVIVGSAR), 43–51 (ARPPPDGTP), 52–60 (RPQLAAEES), 61–69 (PRPRVIFGT), 70–78 (PRARVILGS), 79–87 (PRPRVIVSS), 88–96 (PWPAVVVAS), 97–105 (PRPRTPVGS), 106–114 (PWPRVVVGT), and 115–123 (PRPRVIVGS). The interval 7–125 (PRDDVGSPRP…RPRVIVGSPR (119 aa)) is 13 x 9 AA approximate tandem-repeats of P-R-V-I-V-G-(S/T)-P-R. Ser13 is modified (phosphoserine). A disordered region spans residues 37 to 64 (IVGSARARPPPDGTPRPQLAAEESPRPR). At Thr69 the chain carries Phosphothreonine. Phosphoserine occurs at positions 78, 87, and 96. The segment covering 94 to 121 (VASPRPRTPVGSPWPRVVVGTPRPRVIV) has biased composition (low complexity). The segment at 94 to 198 (VASPRPRTPV…GAPDRHRGQI (105 aa)) is disordered. Ser123 is subject to Phosphoserine. Basic and acidic residues predominate over residues 145–157 (RRQDEHSGTRAEG). Residues 161–178 (GGAAPVPEEGGRFARAQR) show a composition bias toward low complexity.

As to quaternary structure, may interact with EIF5A and ERF1. Post-translationally, phosphorylated during M-phase.

It is found in the nucleus. The protein resides in the nucleolus. This Homo sapiens (Human) protein is Ras-related protein Rab-34, isoform NARR (RAB34).